The following is a 186-amino-acid chain: Elongation factor P (186 aa).

The protein belongs to the elongation factor P family.

The protein resides in the cytoplasm. It participates in protein biosynthesis; polypeptide chain elongation. In terms of biological role, involved in peptide bond synthesis. Stimulates efficient translation and peptide-bond synthesis on native or reconstituted 70S ribosomes in vitro. Probably functions indirectly by altering the affinity of the ribosome for aminoacyl-tRNA, thus increasing their reactivity as acceptors for peptidyl transferase. The chain is Elongation factor P from Laribacter hongkongensis (strain HLHK9).